An 876-amino-acid chain; its full sequence is Neurotrypsin (876 aa).

A signal peptide spans 1–20 (MTLARFVLALMLGALPEVVG). The N-linked (GlcNAc...) asparagine glycan is linked to Asn-26. Residues 29–89 (LHHSHRHSPP…ALQAGHTPRP (61 aa)) form a disordered region. Residues 43 to 54 (YPSYYLPTQQRP) show a composition bias toward low complexity. Over residues 57-72 (TRPPPPLPRFPRPPRA) the composition is skewed to pro residues. The Kringle domain occupies 94–166 (CPAGEPWVSV…GKVDWGYCDC (73 aa)). Intrachain disulfides connect Cys-94–Cys-166, Cys-110–Cys-150, Cys-139–Cys-164, Cys-196–Cys-260, Cys-209–Cys-270, Cys-240–Cys-250, Cys-306–Cys-370, Cys-319–Cys-380, Cys-350–Cys-360, Cys-413–Cys-476, Cys-426–Cys-486, Cys-456–Cys-466, Cys-526–Cys-590, Cys-539–Cys-600, Cys-570–Cys-580, Cys-620–Cys-751, Cys-662–Cys-678, Cys-766–Cys-832, Cys-795–Cys-809, and Cys-822–Cys-851. SRCR domains follow at residues 171-272 (VRLR…TCSF), 281-382 (IRLA…SCTP), 388-488 (IRLA…ACYP), and 501-602 (VRLM…ICDY). The zymogen activation region stretch occupies residues 620 to 631 (CGLRLLHRRQKR). In terms of domain architecture, Peptidase S1 spans 632-875 (IIGGKNSLRG…FVPWIKSVTK (244 aa)). The active-site Charge relay system is the His-677. Asn-684 carries N-linked (GlcNAc...) asparagine glycosylation. The active-site Charge relay system is Asp-727. Ser-826 (charge relay system) is an active-site residue.

The protein belongs to the peptidase S1 family.

It is found in the secreted. Functionally, plays a role in neuronal plasticity and the proteolytic action may subserve structural reorganizations associated with learning and memory operations. The protein is Neurotrypsin (PRSS12) of Gorilla gorilla gorilla (Western lowland gorilla).